The primary structure comprises 494 residues: Ketol-acid reductoisomerase (NADP(+)) (494 aa).

The region spanning 14–208 (LDQLGRCRFM…GGHRAGCLES (195 aa)) is the KARI N-terminal Rossmann domain. NADP(+)-binding positions include 45-48 (CGAQ), arginine 68, arginine 76, serine 78, and 108-110 (DKQ). The active site involves histidine 132. Glycine 158 provides a ligand contact to NADP(+). 2 KARI C-terminal knotted domains span residues 209-344 (SFVA…NYPE) and 345-487 (TDVE…MTDM). Residues aspartate 217, glutamate 221, glutamate 389, and glutamate 393 each coordinate Mg(2+). Substrate is bound at residue serine 414.

This sequence belongs to the ketol-acid reductoisomerase family. The cofactor is Mg(2+).

The enzyme catalyses (2R)-2,3-dihydroxy-3-methylbutanoate + NADP(+) = (2S)-2-acetolactate + NADPH + H(+). It catalyses the reaction (2R,3R)-2,3-dihydroxy-3-methylpentanoate + NADP(+) = (S)-2-ethyl-2-hydroxy-3-oxobutanoate + NADPH + H(+). Its pathway is amino-acid biosynthesis; L-isoleucine biosynthesis; L-isoleucine from 2-oxobutanoate: step 2/4. It functions in the pathway amino-acid biosynthesis; L-valine biosynthesis; L-valine from pyruvate: step 2/4. Functionally, involved in the biosynthesis of branched-chain amino acids (BCAA). Catalyzes an alkyl-migration followed by a ketol-acid reduction of (S)-2-acetolactate (S2AL) to yield (R)-2,3-dihydroxy-isovalerate. In the isomerase reaction, S2AL is rearranged via a Mg-dependent methyl migration to produce 3-hydroxy-3-methyl-2-ketobutyrate (HMKB). In the reductase reaction, this 2-ketoacid undergoes a metal-dependent reduction by NADPH to yield (R)-2,3-dihydroxy-isovalerate. The protein is Ketol-acid reductoisomerase (NADP(+)) of Vibrio parahaemolyticus serotype O3:K6 (strain RIMD 2210633).